A 202-amino-acid chain; its full sequence is Glycerol-3-phosphate acyltransferase (202 aa).

Helical transmembrane passes span 11–31, 87–107, 116–136, and 158–178; these read ALIAALVLGYACGAIPFGLIL, PALAAGLGAFLGHLFPVWLGF, FIGVLLALSPLTLAAFAAIWL, and VILWALGHGGVAALFLVLAAL.

This sequence belongs to the PlsY family. Probably interacts with PlsX.

It localises to the cell inner membrane. The catalysed reaction is an acyl phosphate + sn-glycerol 3-phosphate = a 1-acyl-sn-glycero-3-phosphate + phosphate. It participates in lipid metabolism; phospholipid metabolism. In terms of biological role, catalyzes the transfer of an acyl group from acyl-phosphate (acyl-PO(4)) to glycerol-3-phosphate (G3P) to form lysophosphatidic acid (LPA). This enzyme utilizes acyl-phosphate as fatty acyl donor, but not acyl-CoA or acyl-ACP. The protein is Glycerol-3-phosphate acyltransferase of Methylorubrum populi (strain ATCC BAA-705 / NCIMB 13946 / BJ001) (Methylobacterium populi).